The following is a 360-amino-acid chain: Glutamate 5-kinase (360 aa).

Lysine 7 lines the ATP pocket. Residues serine 47, aspartate 134, and asparagine 146 each coordinate substrate. ATP contacts are provided by residues 166-167 and 210-216; these read TD and TGGISTK. In terms of domain architecture, PUA spans 275–356; that stretch reads VGKITLDDGA…SSIIVVHRDV (82 aa).

Belongs to the glutamate 5-kinase family.

Its subcellular location is the cytoplasm. The catalysed reaction is L-glutamate + ATP = L-glutamyl 5-phosphate + ADP. It functions in the pathway amino-acid biosynthesis; L-proline biosynthesis; L-glutamate 5-semialdehyde from L-glutamate: step 1/2. Functionally, catalyzes the transfer of a phosphate group to glutamate to form L-glutamate 5-phosphate. This is Glutamate 5-kinase from Prochlorococcus marinus (strain AS9601).